The following is an 872-amino-acid chain: Paramyosin (872 aa).

The interval 1 to 31 (MSLYRSPSAALLKSPSQAAFGAPFGSMSVAD) is nonhelical region. Residues 32-851 (LGSLTRLEDK…ESSLHLIRAK (820 aa)) adopt a coiled-coil conformation. The interaction with unc-89 stretch occupies residues 294 to 376 (EITQWKSKFD…ALLERAREQL (83 aa)). Positions 856-866 (VVTGKSSSKIF) are nonhelical region.

Belongs to the paramyosin family. In terms of assembly, homodimer. May interact with unc-89 (via SH3 domain). In terms of processing, phosphorylated on serine residues in the N-terminal non-helical region. In terms of tissue distribution, expressed in body wall muscles of larvae and adults (at protein level). Expressed in gonadal myoepithelial sheath cells (at protein level).

The protein localises to the cytoplasm. It is found in the myofibril. Its subcellular location is the sarcomere. It localises to the a band. In terms of biological role, structural component of the muscle thick filaments which is involved in assembly and organization of sarcomere myofilaments. Involved in ovulation. Plays a role in the formation of muscle connections, also called muscle arm extensions, between the body wall and the motor axons in the dorsal and ventral cord. This Caenorhabditis elegans protein is Paramyosin (unc-15).